A 306-amino-acid polypeptide reads, in one-letter code: Protodermal factor 1 (306 aa).

The signal sequence occupies residues 1–23; that stretch reads MRGMVSFAVWALFAALLSQQLFA. Low complexity predominate over residues 40-56; sequence PPSGSHGTPPSHTPPSS. Residues 40–156 are disordered; it reads PPSGSHGTPP…VVTPPSPIVD (117 aa). The span at 62–83 shows a compositional bias: pro residues; the sequence is PYDPSPSTPSHPSPPSHTPTPS. Positions 84–99 are enriched in low complexity; that stretch reads TPSHTPTPHTPSHTPT. Positions 139 to 154 are enriched in pro residues; it reads SPPPRTPVVVTPPSPI.

As to expression, confined to the shoot apical meristem (SAM) at the layer L1 in vegetative, infloresence and floral meristems, as well as in protoderm of organ primordia, including during embryogenesis. Also present in the tip of emerging lateral root primordia.

May be involved in the regulation of meristem growth. In Arabidopsis thaliana (Mouse-ear cress), this protein is Protodermal factor 1 (PDF1).